A 246-amino-acid polypeptide reads, in one-letter code: Large ribosomal subunit protein uL4 (246 aa).

Positions 37–103 (AAQANRKQDY…TEKDRSLDLN (67 aa)) are disordered. The span at 92 to 103 (PKTEKDRSLDLN) shows a compositional bias: basic and acidic residues.

It belongs to the universal ribosomal protein uL4 family. Part of the 50S ribosomal subunit. Interacts weakly with proteins L18e, L24 and L37e. Has been cross-linked to L18e.

Its function is as follows. One of the primary rRNA binding proteins, this protein initially binds near the 5'-end of the 23S rRNA. It is important during the early stages of 50S assembly. Functionally, makes multiple contacts with different domains of the 23S rRNA in the assembled 50S subunit. Forms part of the polypeptide exit tunnel, in which it helps forms a bend with protein L22. Contacts the macrolide antibiotic spiramycin in the polypeptide exit tunnel. The polypeptide is Large ribosomal subunit protein uL4 (rpl4) (Haloarcula marismortui (strain ATCC 43049 / DSM 3752 / JCM 8966 / VKM B-1809) (Halobacterium marismortui)).